A 287-amino-acid polypeptide reads, in one-letter code: Syntaxin-11 (287 aa).

Residues 41–71 adopt a coiled-coil conformation; the sequence is LESLYRVIQDIQDENQLLLIDVRRLGRQNVR. In terms of domain architecture, t-SNARE coiled-coil homology spans 204-266; the sequence is LNEIESRHRE…GEAKAQVRKA (63 aa).

Belongs to the syntaxin family. Interacts with the SNARE proteins SNAP-23 and VAMP.

It localises to the membrane. Its subcellular location is the golgi apparatus. The protein resides in the trans-Golgi network membrane. Its function is as follows. SNARE that acts to regulate protein transport between late endosomes and the trans-Golgi network. This Mus musculus (Mouse) protein is Syntaxin-11 (Stx11).